Here is a 377-residue protein sequence, read N- to C-terminus: Guanine nucleotide-binding protein subunit alpha-13 (377 aa).

2 S-palmitoyl cysteine lipidation sites follow: Cys-14 and Cys-18. A G-alpha domain is found at 47–377 (RLVKILLLGA…HDNLKQLMLQ (331 aa)). Positions 50-63 (KILLLGAGESGKST) are G1 motif. Residues 58–63 (ESGKST), Ser-173, and 197–200 (LLAR) contribute to the GTP site. Residue Ser-62 coordinates Mg(2+). The G2 motif stretch occupies residues 195 to 203 (DILLARRPT). Thr-203 provides a ligand contact to Mg(2+). Thr-203 carries the post-translational modification Phosphothreonine; by PKA. Positions 218-227 (FKMVDVGGQR) are G3 motif. A G4 motif region spans residues 287–294 (ILFLNKTD). GTP is bound by residues 291 to 294 (NKTD) and Ala-349. Residues 347-352 (TTAINT) are G5 motif.

Belongs to the G-alpha family. G(12) subfamily. In terms of assembly, g proteins are composed of 3 units; alpha, beta and gamma. The alpha chain contains the guanine nucleotide binding site. Interacts with UBXD5. Interacts with HAX1. Interacts (in GTP-bound form) with PPP5C (via TPR repeats); activates PPP5C phosphatase activity and translocates PPP5C to the cell membrane. Interacts with RGS22. Interacts (in GTP-bound form) with ARHGEF1. Interacts (in GTP-bound form) with ARHGEF11 (via RGS domain). Interacts (in GTP-bound form) with ARHGEF12 (via RGS domain). Interacts with CTNND1. Interacts with GASL2L2. Interacts with GPR35. Interacts with GPR174. Palmitoylation is critical for proper membrane localization and signaling. Post-translationally, phosphorylation on Thr-203 by PKA destabilizes the heterotrimer of alpha, beta and gamma, and inhibits Rho activation. In terms of tissue distribution, expressed in testis, including in Leydig cells and in the seminiferous epithelium, in differentiating cells from the spermatogonia to mature spermatozoa stages and round spermatids (at protein level). Expressed in 99.2% of spermatozoa from healthy individuals, but only in 28.6% of macrocephalic spermatozoa from infertile patients (at protein level).

The protein localises to the cell membrane. It localises to the melanosome. Its subcellular location is the cytoplasm. The protein resides in the nucleus. Guanine nucleotide-binding proteins (G proteins) are involved as modulators or transducers in various transmembrane signaling systems. Activates effector molecule RhoA by binding and activating RhoGEFs (ARHGEF1/p115RhoGEF, ARHGEF11/PDZ-RhoGEF and ARHGEF12/LARG). GNA13-dependent Rho signaling subsequently regulates transcription factor AP-1 (activating protein-1). Promotes tumor cell invasion and metastasis by activating RhoA/ROCK signaling pathway. Inhibits CDH1-mediated cell adhesion in a process independent from Rho activation. In lymphoid follicles, transmits P2RY8- and S1PR2-dependent signals that lead to inhibition of germinal center (GC) B cell growth and migration outside the GC niche. This is Guanine nucleotide-binding protein subunit alpha-13 (GNA13) from Homo sapiens (Human).